Consider the following 434-residue polypeptide: UDP-N-acetylglucosamine 1-carboxyvinyltransferase (434 aa).

22–23 is a binding site for phosphoenolpyruvate; that stretch reads KN. Arginine 97 is a UDP-N-acetyl-alpha-D-glucosamine binding site. Aspartate 121 acts as the Proton donor in catalysis. UDP-N-acetyl-alpha-D-glucosamine-binding residues include aspartate 319 and methionine 341.

Belongs to the EPSP synthase family. MurA subfamily.

The protein localises to the cytoplasm. The enzyme catalyses phosphoenolpyruvate + UDP-N-acetyl-alpha-D-glucosamine = UDP-N-acetyl-3-O-(1-carboxyvinyl)-alpha-D-glucosamine + phosphate. The protein operates within cell wall biogenesis; peptidoglycan biosynthesis. Cell wall formation. Adds enolpyruvyl to UDP-N-acetylglucosamine. The sequence is that of UDP-N-acetylglucosamine 1-carboxyvinyltransferase from Bacteroides thetaiotaomicron (strain ATCC 29148 / DSM 2079 / JCM 5827 / CCUG 10774 / NCTC 10582 / VPI-5482 / E50).